The primary structure comprises 86 residues: Putative regulatory protein BBR47_37350 (86 aa).

The protein belongs to the RemA family.

The polypeptide is Putative regulatory protein BBR47_37350 (Brevibacillus brevis (strain 47 / JCM 6285 / NBRC 100599)).